A 392-amino-acid chain; its full sequence is DNA replication and repair protein RecF (392 aa).

An ATP-binding site is contributed by 33 to 40; that stretch reads GANGAGKT.

It belongs to the RecF family.

Its subcellular location is the cytoplasm. The RecF protein is involved in DNA metabolism; it is required for DNA replication and normal SOS inducibility. RecF binds preferentially to single-stranded, linear DNA. It also seems to bind ATP. The polypeptide is DNA replication and repair protein RecF (Caulobacter sp. (strain K31)).